The following is a 342-amino-acid chain: (+)-pulegone reductase (342 aa).

Residues 163-166, lysine 189, tyrosine 205, asparagine 229, 251-257, 281-283, and asparagine 331 contribute to the NADP(+) site; these read GSVG, CGMVSQY, and FVV.

It belongs to the NADP-dependent oxidoreductase L4BD family.

The protein localises to the cytoplasm. The enzyme catalyses (2R,5R)-isomenthone + NADP(+) = (R)-pulegone + NADPH + H(+). It catalyses the reaction (1R,4S)-menthone + NADP(+) = (R)-pulegone + NADPH + H(+). Its pathway is secondary metabolite biosynthesis; terpenoid biosynthesis. With respect to regulation, not inhibited by (+)-menthofuran. Functionally, monoterpene synthase that catalyzes the specific reduction of the 4,8-double bond of (+)-pulegone to produce both (-)-menthone and (+)-isomenthone in a 70:30 ratio. Unable to utilize either (-)-isopiperitenone or (+)-cis-isopulegone, or to catalyze the reverse reaction with (-)-menthone or (+)-isomenthone. Has an absolute requirement for NADPH. In Mentha piperita (Peppermint), this protein is (+)-pulegone reductase.